The sequence spans 1392 residues: DNA-directed RNA polymerase subunit beta' (1392 aa).

The Zn(2+) site is built by C70, C72, C85, and C88. Positions 460, 462, and 464 each coordinate Mg(2+). Residues C810, C884, C891, and C894 each contribute to the Zn(2+) site.

It belongs to the RNA polymerase beta' chain family. As to quaternary structure, the RNAP catalytic core consists of 2 alpha, 1 beta, 1 beta' and 1 omega subunit. When a sigma factor is associated with the core the holoenzyme is formed, which can initiate transcription. Requires Mg(2+) as cofactor. Zn(2+) serves as cofactor.

The catalysed reaction is RNA(n) + a ribonucleoside 5'-triphosphate = RNA(n+1) + diphosphate. Functionally, DNA-dependent RNA polymerase catalyzes the transcription of DNA into RNA using the four ribonucleoside triphosphates as substrates. This is DNA-directed RNA polymerase subunit beta' from Geobacter metallireducens (strain ATCC 53774 / DSM 7210 / GS-15).